Reading from the N-terminus, the 907-residue chain is Potassium channel AKT3 (907 aa).

The Cytoplasmic segment spans residues 1–75 (MPTTKCAVPL…YDRRYELWNN (75 aa)). Residues 76-96 (YLILLVVYSAWVTPFEFGFVP) form a helical membrane-spanning segment. Over 97–102 (EPAGAL) the chain is Extracellular. Residues 103–123 (AAADNAVNAFFAVDIVLTFFV) form a helical membrane-spanning segment. Over 124–146 (AYTDPKTFLLQDDPRKIALRYIT) the chain is Cytoplasmic. The chain crosses the membrane as a helical span at residues 147–167 (TWFVLDVVATIPTELARRILP). The Extracellular segment spans residues 168–174 (PDLRSYG). The chain crosses the membrane as a helical; Voltage-sensor span at residues 175-195 (FFGILRLWRLHRVGILFARLE). At 196–209 (KDRKFSYFWVRCVK) the chain is on the cytoplasmic side. Residues 210 to 230 (LVCVTLFAVHCSACFYYLLAD) traverse the membrane as a helical segment. Topologically, residues 231 to 257 (RYPDPTNTWISAYMPNFHKASIWSRYV) are extracellular. Positions 258–277 (ASMYWSITTLSTVGYGDMHA) form an intramembrane region, pore-forming. Over 278–288 (ENTGEMVFTTT) the chain is Extracellular. The helical transmembrane segment at 289 to 309 (YMLFNLGLTAYIIGNMTNLVV) threads the bilayer. The Cytoplasmic portion of the chain corresponds to 310–907 (HGTSRTRKFR…VPPENRSRNQ (598 aa)). 388–512 (LFEGVSNDLI…TIVMNNLIQY (125 aa)) is a binding site for a nucleoside 3',5'-cyclic phosphate. ANK repeat units follow at residues 539–568 (DFPITLCFAASKGDSFLLHQLLKRGLDPNE), 572–601 (YGRTALHIAASNGNEQCVRLLLENGADSNS), 605–634 (EGRVPLWEALCRRHQTVVQLLVDAGADLSG), 636–665 (DAAPYARVAVEQNDAALLGEIVRHGGDVSG), and 670–699 (DGTTALHRAVLDGNVQMARLLLEHGADADA). 2 disordered regions span residues 726-779 (ATRH…TPQR) and 801-824 (GGYRGGGGGGGAAAERERSSSSPP). A compositionally biased stretch (low complexity) spans 754-776 (SSPSSSSRRGRTSSTSAASARST). Gly residues predominate over residues 803 to 812 (YRGGGGGGGA). One can recognise a KHA domain in the interval 827–907 (RVAISCPESR…VPPENRSRNQ (81 aa)).

It belongs to the potassium channel family. Plant (TC 1.A.1.4) subfamily.

The protein resides in the membrane. Functionally, probable inward-rectifying potassium channel. Assuming opened or closed conformations in response to the voltage difference across the membrane, the channel is activated by hyperpolarization. This Oryza sativa subsp. japonica (Rice) protein is Potassium channel AKT3.